We begin with the raw amino-acid sequence, 371 residues long: tRNA-specific 2-thiouridylase MnmA (371 aa).

Residues 12-19 and methionine 38 contribute to the ATP site; that span reads GMSGGVDS. Residues 98–100 form an interaction with target base in tRNA region; it reads NPD. The Nucleophile role is filled by cysteine 103. Cysteine 103 and cysteine 200 are oxidised to a cystine. Glycine 128 provides a ligand contact to ATP. Residues 150 to 152 form an interaction with tRNA region; the sequence is KDQ. The active-site Cysteine persulfide intermediate is the cysteine 200. Positions 312 to 313 are interaction with tRNA; sequence RY.

This sequence belongs to the MnmA/TRMU family. In terms of assembly, interacts with TusE.

The protein localises to the cytoplasm. It carries out the reaction S-sulfanyl-L-cysteinyl-[protein] + uridine(34) in tRNA + AH2 + ATP = 2-thiouridine(34) in tRNA + L-cysteinyl-[protein] + A + AMP + diphosphate + H(+). Catalyzes the 2-thiolation of uridine at the wobble position (U34) of tRNA(Lys), tRNA(Glu) and tRNA(Gln), leading to the formation of s(2)U34, the first step of tRNA-mnm(5)s(2)U34 synthesis. Sulfur is provided by IscS, via a sulfur-relay system. Binds ATP and its substrate tRNAs. The sequence is that of tRNA-specific 2-thiouridylase MnmA from Yersinia pestis bv. Antiqua (strain Antiqua).